The primary structure comprises 160 residues: Class B acid phosphatase (160 aa).

Positions 1-23 (MRKVTLTLSAIALALSLNGAAMA) are cleaved as a signal peptide. Catalysis depends on Asp69, which acts as the Nucleophile. Residues Asp69 and Asp71 each contribute to the Mg(2+) site. Residue Asp71 is the Proton donor of the active site. Residue 137-138 (TG) participates in substrate binding.

Belongs to the class B bacterial acid phosphatase family. Homotetramer. Requires Mg(2+) as cofactor.

The protein resides in the periplasm. The enzyme catalyses a phosphate monoester + H2O = an alcohol + phosphate. Functionally, dephosphorylates several organic phosphate monoesters. Also has a phosphotransferase activity catalyzing the transfer of low-energy phosphate groups from organic phosphate monoesters to free hydroxyl groups of various organic compounds. This chain is Class B acid phosphatase (aphA), found in Proteus mirabilis.